The primary structure comprises 521 residues: GMP synthase [glutamine-hydrolyzing] (521 aa).

The Glutamine amidotransferase type-1 domain maps to 8–203; it reads KILILDFGAQ…VVDICGCQTL (196 aa). Catalysis depends on Cys-85, which acts as the Nucleophile. Active-site residues include His-177 and Glu-179. Residues 204 to 396 form the GMPS ATP-PPase domain; that stretch reads WTAANIIDDQ…LGLPRTMVYR (193 aa). Residue 231–237 coordinates ATP; the sequence is SGGVDSS.

As to quaternary structure, homodimer.

The enzyme catalyses XMP + L-glutamine + ATP + H2O = GMP + L-glutamate + AMP + diphosphate + 2 H(+). The protein operates within purine metabolism; GMP biosynthesis; GMP from XMP (L-Gln route): step 1/1. Catalyzes the synthesis of GMP from XMP. The protein is GMP synthase [glutamine-hydrolyzing] of Xanthomonas oryzae pv. oryzae (strain PXO99A).